We begin with the raw amino-acid sequence, 635 residues long: Threonine--tRNA ligase (635 aa).

In terms of domain architecture, TGS spans 1 to 61 (MIAITLPDGS…EQNVDLAIVT (61 aa)). The interval 242–533 (DHRKLGKLLD…LLENHAGALP (292 aa)) is catalytic. 3 residues coordinate Zn(2+): C333, H384, and H510.

Belongs to the class-II aminoacyl-tRNA synthetase family. As to quaternary structure, homodimer. Requires Zn(2+) as cofactor.

Its subcellular location is the cytoplasm. It carries out the reaction tRNA(Thr) + L-threonine + ATP = L-threonyl-tRNA(Thr) + AMP + diphosphate + H(+). Functionally, catalyzes the attachment of threonine to tRNA(Thr) in a two-step reaction: L-threonine is first activated by ATP to form Thr-AMP and then transferred to the acceptor end of tRNA(Thr). Also edits incorrectly charged L-seryl-tRNA(Thr). The sequence is that of Threonine--tRNA ligase from Ralstonia nicotianae (strain ATCC BAA-1114 / GMI1000) (Ralstonia solanacearum).